Here is a 581-residue protein sequence, read N- to C-terminus: Pentatricopeptide repeat-containing protein At1g34160 (581 aa).

PPR repeat units follow at residues 67-101 (LTNDWNAIIRGFAGSSHPSLAFSWYRSMLQQSSSS), 108-142 (DALTCSFTLKACARALCSSAMDQLHCQINRRGLSA), 143-173 (DSLLCTTLLDAYSKNGDLISAYKLFDEMPVR), 174-208 (DVASWNALIAGLVSGNRASEAMELYKRMETEGIRR), 209-239 (SEVTVVAALGACSHLGDVKEGENIFHGYSND), 240-270 (NVIVSNAAIDMYSKCGFVDKAYQVFEQFTGK), 272-306 (SVVTWNTMITGFAVHGEAHRALEIFDKLEDNGIKP), 307-341 (DDVSYLAALTACRHAGLVEYGLSVFNNMACKGVER), and 342-372 (NMKHYGCVVDLLSRAGRLREAHDIICSMSMI). The interval 377-452 (LWQSLLGASE…IPGLSYIEAK (76 aa)) is type E motif. The tract at residues 453-483 (GTIHEFYNSDKSHEQWREIYEKIDEIRFKIR) is type E(+) motif. The segment at 484-581 (EDGYVAQTGL…DGSCSCRDFW (98 aa)) is type DYW motif.

It belongs to the PPR family. PCMP-H subfamily.

In Arabidopsis thaliana (Mouse-ear cress), this protein is Pentatricopeptide repeat-containing protein At1g34160 (PCMP-H68).